The following is a 458-amino-acid chain: Probable beta-eliminating lyase (458 aa).

Lys257 bears the N6-(pyridoxal phosphate)lysine mark.

Belongs to the beta-eliminating lyase family. The cofactor is pyridoxal 5'-phosphate.

The chain is Probable beta-eliminating lyase from Trichomonas vaginalis (strain ATCC PRA-98 / G3).